A 295-amino-acid polypeptide reads, in one-letter code: Protoheme IX farnesyltransferase 2 (295 aa).

Transmembrane regions (helical) follow at residues 9–29, 36–56, 85–105, 108–128, 135–155, 163–183, 209–229, 230–250, and 263–283; these read ITKPGIIFGNVLSVAGGFFLA, LAIFLAAMIGTSLVVASGCVF, VALVYASILGVAGVALLYYVA, LAALFAVIGFVIYVGFYSLYL, GTLVGSLSGAMPPVIGYVAVS, LTLLVMFSLWQMPHSYAIAIF, ILLYILAFLVATLMLTFSGYA, GMSYLAVAAAMGMYWLYMAWT, and KLFVFSIFTITALSVMMSVDF.

It belongs to the UbiA prenyltransferase family. Protoheme IX farnesyltransferase subfamily.

The protein localises to the cell inner membrane. It carries out the reaction heme b + (2E,6E)-farnesyl diphosphate + H2O = Fe(II)-heme o + diphosphate. Its pathway is porphyrin-containing compound metabolism; heme O biosynthesis; heme O from protoheme: step 1/1. Functionally, converts heme B (protoheme IX) to heme O by substitution of the vinyl group on carbon 2 of heme B porphyrin ring with a hydroxyethyl farnesyl side group. In Pseudomonas fluorescens (strain ATCC BAA-477 / NRRL B-23932 / Pf-5), this protein is Protoheme IX farnesyltransferase 2.